Here is a 275-residue protein sequence, read N- to C-terminus: Arylalkylamine N-acetyltransferase 1 (275 aa).

Acetyl-CoA is bound by residues 181–183 (LSV) and 189–193 (GLGIA). In terms of domain architecture, N-acetyltransferase spans 181–254 (LSVDTNYRGL…GEVVFKPAAP (74 aa)).

Belongs to the acetyltransferase family. AANAT subfamily. In the adult, expressed in the midgut portion of the thoracic segments and the frontal half of the abdomen (at protein level). Expressed in the epithelial cell layer facing the lumen of the gut (at protein level). In the brain, expressed in a sub-populations of neurons and astrocytes, and in a set of distinct stripes in the optic lobes (at protein level). Expressed mainly in serotonergic neurons but also in subsets of glutamatergic, GABAergic and cholinergic neurons (at protein level).

Its subcellular location is the cytoplasm. It localises to the nucleus. The catalysed reaction is a 2-arylethylamine + acetyl-CoA = an N-acetyl-2-arylethylamine + CoA + H(+). The enzyme catalyses serotonin + acetyl-CoA = N-acetylserotonin + CoA + H(+). It carries out the reaction dopamine + acetyl-CoA = N-acetyldopamine + CoA + H(+). It catalyses the reaction tyramine + acetyl-CoA = N-acetyltyramine + CoA + H(+). The catalysed reaction is octopamine + acetyl-CoA = N-acetyloctopamine + CoA + H(+). The enzyme catalyses 5-methoxytryptamine + acetyl-CoA = melatonin + CoA + H(+). It carries out the reaction 2-phenylethylamine + acetyl-CoA = N-(2-phenylethyl)acetamide + CoA + H(+). It catalyses the reaction noradrenaline + acetyl-CoA = N-acetylnoradrenaline + CoA + H(+). The catalysed reaction is tyramine + butanoyl-CoA = N-butanoyltyramine + CoA + H(+). The enzyme catalyses tyramine + hexanoyl-CoA = N-hexanoyltyramine + CoA + H(+). It carries out the reaction tryptamine + acetyl-CoA = N-acetyltryptamine + CoA + H(+). It catalyses the reaction dopamine + hexadecanoyl-CoA = N-hexadecanoyl-dopamine + CoA + H(+). The catalysed reaction is dopamine + (9Z)-octadecenoyl-CoA = N-(9Z-octadecanoyl)-dopamine + CoA + H(+). The enzyme catalyses serotonin + hexadecanoyl-CoA = N-hexadecanoyl-serotonin + CoA + H(+). It carries out the reaction serotonin + (9Z)-octadecenoyl-CoA = N-(9Z-octadecenoyl)-serotonin + CoA + H(+). It catalyses the reaction serotonin + octadecanoyl-CoA = N-octadecanoyl-serotonin + CoA + H(+). The catalysed reaction is serotonin + (5Z,8Z,11Z,14Z)-eicosatetraenoyl-CoA = N-[(5Z,8Z,11Z,14Z)-eicosatetraenoyl]-serotonin + CoA + H(+). It participates in aromatic compound metabolism; melatonin biosynthesis; melatonin from serotonin: step 1/2. Its activity is regulated as follows. Inhibited by long-chain acyl-CoA thioesters, oleoyl-CoA (an analog of acetyl-CoA) and tyrosol (an analog of tyramine). Its function is as follows. Catalyzes N-acetylation of tryptamine, tyramine, dopamine, serotonin and octopamine. In astrocytes, regulates sleep homeostasis by limiting the accumulation of serotonin and dopamine in the brain upon sleep deprivation. Is not essential for sclerotization. The sequence is that of Arylalkylamine N-acetyltransferase 1 from Drosophila melanogaster (Fruit fly).